Consider the following 227-residue polypeptide: MGRPLLLPLLLLLQPPAFLQPGGSTGSGPSYLYGVTQPKHLSASMGGSVEIPFSFYYPWELAIVPNVRISWRRGHFHGQSFYSTRPPSIHKDYVNRLFLNWTEGQESGFLRISNLRKEDQSVYFCRVELDTRRSGRQQLQSIKGTKLTITQAVTTTTTWRPSSTTTIAGLRVTESKGHSESWHLSLDTAIRVALAVAVLKTVILGLLCLLLLWWRRRKGSRAPSSDF.

A signal peptide spans 1–19 (MGRPLLLPLLLLLQPPAFL). The Extracellular segment spans residues 20 to 191 (QPGGSTGSGP…WHLSLDTAIR (172 aa)). The region spanning 21–143 (PGGSTGSGPS…SGRQQLQSIK (123 aa)) is the Ig-like V-type domain. A glycan (N-linked (GlcNAc...) asparagine) is linked at asparagine 100. The helical transmembrane segment at 192–212 (VALAVAVLKTVILGLLCLLLL) threads the bilayer. The Cytoplasmic segment spans residues 213–227 (WWRRRKGSRAPSSDF).

Its subcellular location is the membrane. In terms of biological role, paired receptors consist of highly related activating and inhibitory receptors and are widely involved in the regulation of the immune system. PILRB is thought to act as a cellular signaling activating receptor that associates with ITAM-bearing adapter molecules on the cell surface. The chain is Paired immunoglobulin-like type 2 receptor beta (PILRB) from Homo sapiens (Human).